We begin with the raw amino-acid sequence, 102 residues long: NADH-quinone oxidoreductase subunit K (102 aa).

The next 3 membrane-spanning stretches (helical) occupy residues 5–25, 31–51, and 62–82; these read LGHF…GIFL, IVLL…FVAF, and VFVF…LAIL.

Belongs to the complex I subunit 4L family. NDH-1 is composed of 14 different subunits. Subunits NuoA, H, J, K, L, M, N constitute the membrane sector of the complex.

Its subcellular location is the cell inner membrane. It carries out the reaction a quinone + NADH + 5 H(+)(in) = a quinol + NAD(+) + 4 H(+)(out). NDH-1 shuttles electrons from NADH, via FMN and iron-sulfur (Fe-S) centers, to quinones in the respiratory chain. The immediate electron acceptor for the enzyme in this species is believed to be ubiquinone. Couples the redox reaction to proton translocation (for every two electrons transferred, four hydrogen ions are translocated across the cytoplasmic membrane), and thus conserves the redox energy in a proton gradient. This is NADH-quinone oxidoreductase subunit K from Paracidovorax citrulli (strain AAC00-1) (Acidovorax citrulli).